Reading from the N-terminus, the 510-residue chain is Peptide transporter imqJ (510 aa).

3 helical membrane passes run 1–21, 31–51, and 57–77; these read MVNQ…AVVA, IIFS…SSLP, and GISL…TGGI. Residue N80 is glycosylated (N-linked (GlcNAc...) asparagine). Transmembrane regions (helical) follow at residues 116–136, 143–163, 231–251, and 269–289; these read IFTT…LITI, FSAA…IVLV, IFIL…NFIS, and IDPI…FPFL. Positions 348-468 constitute a Fe2OG dioxygenase domain; it reads PAASEIRLLY…RCSSVFFFKA (121 aa). H377 and D379 together coordinate Fe cation. The N-linked (GlcNAc...) asparagine glycan is linked to N421. H439 serves as a coordination point for Fe cation. Residue R459 coordinates 2-oxoglutarate.

This sequence belongs to the major facilitator superfamily. Proton-dependent oligopeptide transporter (POT/PTR) (TC 2.A.17) family.

The protein resides in the membrane. In terms of biological role, peptide transporter; part of the gene cluster that mediates the biosynthesis of imizoquins A to D, tripeptide-derived alkaloids that serve a protective role against oxidative stress that are essential for normal germination. This is Peptide transporter imqJ from Aspergillus flavus (strain ATCC 200026 / FGSC A1120 / IAM 13836 / NRRL 3357 / JCM 12722 / SRRC 167).